A 156-amino-acid polypeptide reads, in one-letter code: 1-methylthio-D-xylulose 5-phosphate methylsulfurylase (156 aa).

A Cupin type-2 domain is found at 55–122 (YFEVGPGGHS…ADEALGFLCM (68 aa)). Mn(2+) is bound by residues Glu67, His69, His73, and His107. Cys121 is an active-site residue.

It carries out the reaction S-methyl-1-thio-D-xylulose 5-phosphate + glutathione = S-(methylsulfanyl)glutathione + 1-deoxy-D-xylulose 5-phosphate. It catalyses the reaction S-(methylsulfanyl)glutathione + AH2 = methanethiol + glutathione + A. It participates in amino-acid biosynthesis; L-methionine biosynthesis via salvage pathway. The protein operates within metabolic intermediate biosynthesis; 1-deoxy-D-xylulose 5-phosphate biosynthesis. In terms of biological role, catalyzes the formation of S-(methylsulfanyl)glutathione and 1-deoxy-D-xylulose 5-phosphate (DXP) from 1-methylthioxylulose 5-phosphate (MTXu-5P). The S-(methylsulfanyl)glutathione is reductively cleaved to relase methanethiol in a second reaction. Involved in the MTA-isoprenoid shunt of the methionine salvage pathway. This is 1-methylthio-D-xylulose 5-phosphate methylsulfurylase from Rhodospirillum rubrum (strain ATCC 11170 / ATH 1.1.1 / DSM 467 / LMG 4362 / NCIMB 8255 / S1).